Reading from the N-terminus, the 129-residue chain is Sigma factor-binding protein Crl (129 aa).

The essential for activity stretch occupies residues 99-119; sequence TQNCFHLKLVKTLEENFQLSV.

Belongs to the Crl family.

The protein resides in the cytoplasm. Its function is as follows. Binds to the sigma-S subunit of RNA polymerase, activating expression of sigma-S-regulated genes. Stimulates RNA polymerase holoenzyme formation and may bind to several other sigma factors, such as sigma-70 and sigma-32. This is Sigma factor-binding protein Crl from Vibrio vulnificus (strain CMCP6).